A 223-amino-acid chain; its full sequence is Cytotoxic T-lymphocyte protein 4 (223 aa).

The N-terminal stretch at 1–35 (MACLGFQRHKAQLNLATRTWPCTLLFFLLFIPVFC) is a signal peptide. Over 36–161 (KAMHVAQPAV…IDPEPCPDSD (126 aa)) the chain is Extracellular. The Ig-like V-type domain occupies 39–140 (HVAQPAVVLA…VELMYPPPYY (102 aa)). The homodimerization stretch occupies residues 46 to 50 (VLASS). 2 cysteine pairs are disulfide-bonded: Cys-58/Cys-129 and Cys-85/Cys-103. A glycan (N-linked (GlcNAc...) asparagine) is linked at Asn-113. The tract at residues 134–139 (MYPPPY) is important for interaction with CD80 and CD86. Asn-145 is a glycosylation site (N-linked (GlcNAc...) asparagine). The homodimerization stretch occupies residues 150 to 155 (YVIDPE). A helical transmembrane segment spans residues 162–182 (FLLWILAAVSSGLFFYSFLLT). At 183–223 (AVSLSKMLKKRSPLTTGVYVKMPPTEPECEKQFQPYFIPIN) the chain is on the cytoplasmic side. Tyr-201 carries the post-translational modification Phosphotyrosine; by TXK and JAK2.

Homodimer; disulfide-linked. Binds to CD80/B7-1 and CD86/B7.2. Interacts with ICOSLG. In terms of processing, N-glycosylation is important for dimerization. Post-translationally, phosphorylation at Tyr-201 prevents binding to the AP-2 adapter complex, blocks endocytosis, and leads to retention of CTLA4 on the cell surface. Widely expressed with highest levels in lymphoid tissues. Detected in activated T-cells where expression levels are 30- to 50-fold less than CD28, the stimulatory coreceptor, on the cell surface following activation.

It localises to the cell membrane. Inhibitory receptor acting as a major negative regulator of T-cell responses. The affinity of CTLA4 for its natural B7 family ligands, CD80 and CD86, is considerably stronger than the affinity of their cognate stimulatory coreceptor CD28. In Homo sapiens (Human), this protein is Cytotoxic T-lymphocyte protein 4 (CTLA4).